A 138-amino-acid chain; its full sequence is ATP synthase epsilon chain (138 aa).

Residues 88 to 119 (DREEARSTLSAAQARLDQSEQSEDKQERYEAQ) are disordered. A compositionally biased stretch (basic and acidic residues) spans 109 to 119 (SEDKQERYEAQ).

This sequence belongs to the ATPase epsilon chain family. F-type ATPases have 2 components, CF(1) - the catalytic core - and CF(0) - the membrane proton channel. CF(1) has five subunits: alpha(3), beta(3), gamma(1), delta(1), epsilon(1). CF(0) has three main subunits: a, b and c.

Its subcellular location is the cellular thylakoid membrane. Produces ATP from ADP in the presence of a proton gradient across the membrane. The sequence is that of ATP synthase epsilon chain from Acaryochloris marina (strain MBIC 11017).